The sequence spans 196 residues: Large ribosomal subunit protein uL5 (196 aa).

The protein belongs to the universal ribosomal protein uL5 family. In terms of assembly, part of the 50S ribosomal subunit; part of the 5S rRNA/L5/L18/L25 subcomplex. Contacts the 5S rRNA and the P site tRNA. Forms a bridge to the 30S subunit in the 70S ribosome.

This is one of the proteins that bind and probably mediate the attachment of the 5S RNA into the large ribosomal subunit, where it forms part of the central protuberance. In the 70S ribosome it contacts protein S13 of the 30S subunit (bridge B1b), connecting the 2 subunits; this bridge is implicated in subunit movement. Contacts the P site tRNA; the 5S rRNA and some of its associated proteins might help stabilize positioning of ribosome-bound tRNAs. The chain is Large ribosomal subunit protein uL5 from Acidothermus cellulolyticus (strain ATCC 43068 / DSM 8971 / 11B).